The primary structure comprises 458 residues: Bifunctional protein GlmU (458 aa).

A pyrophosphorylase region spans residues 1 to 232; it reads MISPLSVIIL…TFEIEGVNNR (232 aa). Residues 10–13, K24, Q79, 84–85, 106–108, G142, E157, N172, and N230 contribute to the UDP-N-acetyl-alpha-D-glucosamine site; these read LAAG, GT, and YGD. D108 provides a ligand contact to Mg(2+). N230 lines the Mg(2+) pocket. Residues 233–253 are linker; it reads QQLASLERTWQGKLVADLQEA. The tract at residues 254–458 is N-acetyltransferase; the sequence is GVQFADPTRV…KDNFQRPTKK (205 aa). UDP-N-acetyl-alpha-D-glucosamine is bound by residues R336 and K354. Catalysis depends on H366, which acts as the Proton acceptor. 2 residues coordinate UDP-N-acetyl-alpha-D-glucosamine: Y369 and N380. Acetyl-CoA-binding positions include A383, 389–390, S408, A426, and R443; that span reads NY.

The protein in the N-terminal section; belongs to the N-acetylglucosamine-1-phosphate uridyltransferase family. In the C-terminal section; belongs to the transferase hexapeptide repeat family. Homotrimer. It depends on Mg(2+) as a cofactor.

It localises to the cytoplasm. The enzyme catalyses alpha-D-glucosamine 1-phosphate + acetyl-CoA = N-acetyl-alpha-D-glucosamine 1-phosphate + CoA + H(+). It catalyses the reaction N-acetyl-alpha-D-glucosamine 1-phosphate + UTP + H(+) = UDP-N-acetyl-alpha-D-glucosamine + diphosphate. Its pathway is nucleotide-sugar biosynthesis; UDP-N-acetyl-alpha-D-glucosamine biosynthesis; N-acetyl-alpha-D-glucosamine 1-phosphate from alpha-D-glucosamine 6-phosphate (route II): step 2/2. It participates in nucleotide-sugar biosynthesis; UDP-N-acetyl-alpha-D-glucosamine biosynthesis; UDP-N-acetyl-alpha-D-glucosamine from N-acetyl-alpha-D-glucosamine 1-phosphate: step 1/1. The protein operates within bacterial outer membrane biogenesis; LPS lipid A biosynthesis. In terms of biological role, catalyzes the last two sequential reactions in the de novo biosynthetic pathway for UDP-N-acetylglucosamine (UDP-GlcNAc). The C-terminal domain catalyzes the transfer of acetyl group from acetyl coenzyme A to glucosamine-1-phosphate (GlcN-1-P) to produce N-acetylglucosamine-1-phosphate (GlcNAc-1-P), which is converted into UDP-GlcNAc by the transfer of uridine 5-monophosphate (from uridine 5-triphosphate), a reaction catalyzed by the N-terminal domain. The polypeptide is Bifunctional protein GlmU (Psychrobacter arcticus (strain DSM 17307 / VKM B-2377 / 273-4)).